Here is a 200-residue protein sequence, read N- to C-terminus: Outer-membrane lipoprotein carrier protein (200 aa).

Residues 1–18 form the signal peptide; the sequence is MKAVVFAMVMAVSFNVFA.

This sequence belongs to the LolA family. Monomer.

The protein resides in the periplasm. Its function is as follows. Participates in the translocation of lipoproteins from the inner membrane to the outer membrane. Only forms a complex with a lipoprotein if the residue after the N-terminal Cys is not an aspartate (The Asp acts as a targeting signal to indicate that the lipoprotein should stay in the inner membrane). This is Outer-membrane lipoprotein carrier protein from Idiomarina loihiensis (strain ATCC BAA-735 / DSM 15497 / L2-TR).